The following is a 91-amino-acid chain: Early E3B 10.4 kDa protein (91 aa).

A signal peptide spans 1-22; the sequence is MIPRVFILLTLVALFCACSTLA. Residues 23–34 lie on the Lumenal side of the membrane; the sequence is AVSHIEVDCIPA. Residues 35–60 traverse the membrane as a helical segment; that stretch reads FTVYLLYGFVTLTLICSLITVVIAFI. Topologically, residues 61 to 91 are cytoplasmic; it reads QCIDWVCVRFAYLRHHPQYRDRTIAELLRIL.

The protein belongs to the adenoviridae E3B family.

Its subcellular location is the host endoplasmic reticulum membrane. Down-regulates the EGF receptor. The chain is Early E3B 10.4 kDa protein from Homo sapiens (Human).